Reading from the N-terminus, the 361-residue chain is Phospho-N-acetylmuramoyl-pentapeptide-transferase (361 aa).

A run of 10 helical transmembrane segments spans residues 28-48 (LAII…IKFL), 74-94 (TMGG…LADL), 99-119 (IWIT…DDYA), 133-153 (SKFL…EYLD), 168-188 (LSLD…VGSS), 203-223 (VPIA…GNLI), 236-256 (TGEL…FLWF), 263-283 (VFMG…ISVI), 288-308 (IVLA…ILQV), and 338-358 (KVVI…LSSL).

Belongs to the glycosyltransferase 4 family. MraY subfamily. It depends on Mg(2+) as a cofactor.

It is found in the cell inner membrane. The catalysed reaction is UDP-N-acetyl-alpha-D-muramoyl-L-alanyl-gamma-D-glutamyl-meso-2,6-diaminopimeloyl-D-alanyl-D-alanine + di-trans,octa-cis-undecaprenyl phosphate = di-trans,octa-cis-undecaprenyl diphospho-N-acetyl-alpha-D-muramoyl-L-alanyl-D-glutamyl-meso-2,6-diaminopimeloyl-D-alanyl-D-alanine + UMP. Its pathway is cell wall biogenesis; peptidoglycan biosynthesis. Functionally, catalyzes the initial step of the lipid cycle reactions in the biosynthesis of the cell wall peptidoglycan: transfers peptidoglycan precursor phospho-MurNAc-pentapeptide from UDP-MurNAc-pentapeptide onto the lipid carrier undecaprenyl phosphate, yielding undecaprenyl-pyrophosphoryl-MurNAc-pentapeptide, known as lipid I. This Rickettsia prowazekii (strain Madrid E) protein is Phospho-N-acetylmuramoyl-pentapeptide-transferase.